The chain runs to 2877 residues: Desmoplakin (2877 aa).

Positions 1–20 (MSCNGGSHPRINTLGRMTRA) are disordered. The segment at 1–591 (MSCNGGSHPR…DYMKTIEDLE (591 aa)) is interaction with PKP1, JUP, PKP2. Positions 1-1063 (MSCNGGSHPR…ANSENCNKNK (1063 aa)) are globular 1. 2 positions are modified to phosphoserine: Ser-22 and Ser-62. Tyr-65 carries the post-translational modification Phosphotyrosine. Thr-70 carries the phosphothreonine modification. Phosphoserine occurs at positions 174, 175, and 183. Spectrin repeat units follow at residues 185–278 (SGWD…HLRQ) and 279–382 (LQNI…LKEN). Residues 383–453 (AAYFQFFEEA…NLVNKSKKIV (71 aa)) form a Spectrin 3a repeat. An SH3 domain is found at 465–522 (NKPIILRALCDYKQDQKIVHKGDECILKDNNERSKWYVTGPGGVDMLVPSVGLIIPPP). The stretch at 523 to 552 (NPLAVDLSCKIEQYYEAILALWNQLYINMK) is one Spectrin 3b repeat. 3 Spectrin repeats span residues 553–634 (SLVS…IQLP), 661–776 (VIET…SLCS), and 777–890 (VRAL…DLEK). Coiled-coil stretches lie at residues 1034–1280 (LKLK…AEEN), 1313–1354 (NARH…YENE), 1395–1443 (TSGY…QKAS), and 1473–1926 (KQSL…KLED). Residues 1064–1952 (FLDQNLQKYQ…QKEIDKLRQR (889 aa)) are central fibrous rod domain. Phosphoserine is present on residues Ser-1665, Ser-1715, and Ser-2031. A globular 2 region spans residues 1953–2877 (PYGSHRETQT…YSFSSSSIGY (925 aa)). The tract at residues 1967-2215 (TVDSSKLVFD…LLLSVQKRSM (249 aa)) is 4.5 X 38 AA tandem repeats (Domain A). Plectin repeat units follow at residues 2016-2052 (QPFLRGAGAIAGASASPKEKYSLVEAKRKKFITPEST), 2053-2090 (VMLLEAQAATGGIIDPHRNEKLTVDNAIARDLIDFDDR), 2091-2128 (QQIYTAEKAITGFDDPFSGKTVSVSEAIKKNLIDRETG), 2129-2166 (MRLLEAQLASGGVVDPVNSVFLPKDVALARGLIDRDLY), 2170-2204 (NDPRDSQKNFVDPITKKKVSYMQLRERCRIEPHTG), 2205-2240 (LLLLSVQKRSMSFQGIRQPVTVTELVDSGILRPSTV), 2258-2295 (KDFLQGSSCIAGIYNETTKQKLGIYEAMKIGLVRPGTA), 2296-2333 (LELLEAQAATGFIVDPVSNLRLPVEEAYKRGLVGIEFK), 2334-2371 (EKLLSAERAVTGYNDPETGNIISLFQAMNKELIEKGHG), 2372-2409 (IRLLEAQIATGGIIDPKESHRLPVDMAYKRGYFNEELS), 2413-2447 (SDPSDDTKGFFDPNTEENLTYLQLKERCIKDEETG), 2463-2500 (SQKNTLRKRRVVIVDPETNKEMSVQEAYKKGLIDYETF), 2514-2551 (TITGSDGSTRVVLVDRKTGSQYDIQDAIDKGLVDRKFF), 2617-2654 (SDPLEESSPIAAIFDTENLEKISITEGIERGIVDSITG), 2655-2692 (QRLLEAQACTGGIIHPTTGQKLSLQDAVSQGLIDQDMA), 2731-2768 (QRFLEFQFLTGGLVDPEVHGRISTEEAIRKGFIDGRAA), and 2769-2806 (QRLQDISSYAKILTCPKTKLKISYKDAMNRSMVEDITG). A phosphoserine mark is found at Ser-2214, Ser-2216, and Ser-2232. Positions 2251–2453 (DEVGERIKDF…EETGLCLLPL (203 aa)) are 4.5 X 38 AA tandem repeats (Domain B). The LRR 15 repeat unit spans residues 2603–2628 (ISSVRNLTIRSSSLSDPLEESSPIAA). The tract at residues 2616–2828 (LSDPLEESSP…GLPSPYNMSA (213 aa)) is 4.5 X 38 AA tandem repeats (Domain C). Phosphoserine is present on residues Ser-2817 and Ser-2822. The disordered stretch occupies residues 2817-2877 (SKGLPSPYNM…YSFSSSSIGY (61 aa)). Residue Tyr-2824 is modified to Phosphotyrosine. Residues Ser-2827 and Ser-2831 each carry the phosphoserine modification. The segment at 2830–2853 (GSRSGSRSGSRSGSRSGSRSGSRR) is 6 X 4 AA tandem repeats of G-S-R-[SR]. A compositionally biased stretch (low complexity) spans 2830-2853 (GSRSGSRSGSRSGSRSGSRSGSRR). Omega-N-methylarginine is present on residues Arg-2832 and Arg-2853. Ser-2855 carries the phosphoserine modification. Thr-2859 carries the post-translational modification Phosphothreonine. Low complexity predominate over residues 2862 to 2877 (SSYSYSYSFSSSSIGY). Ser-2874 is modified (phosphoserine).

This sequence belongs to the plakin or cytolinker family. Homodimer. Interacts with COL17A1 (via cytoplasmic region). Interacts with DSC2. Interacts with PKP1. Interacts with PKP2. Interacts weakly with TMEM65. Phosphorylation at Ser-2855 increases association with intermediate filament cytokeratin, potentially facilitating interaction between desmosome junctions and intermediate filament architecture. As to expression, expressed in cardiomyocytes (at protein level).

Its subcellular location is the cell junction. It is found in the desmosome. It localises to the cell membrane. The protein localises to the cytoplasm. In terms of biological role, major high molecular weight protein of desmosomes. Regulates profibrotic gene expression in cardiomyocytes via activation of the MAPK14/p38 MAPK signaling cascade and increase in TGFB1 protein abundance. This chain is Desmoplakin, found in Rattus norvegicus (Rat).